The sequence spans 382 residues: MKIILVVFVLIFVGVIGFNMIKGVMISRAIAGMPESSSPVTALEVQPREWTPVINTTGLVRPNQGAMLSTQNAGAVSQVLVQNGQNVKKGEVLVELDSSVERANLQAAQAQLSALRQTYQRYVGLLNSNAVSRQEMDNAKAAYDAQVASIESLKAAIERRKIVAPFDGKAGIVKINVGQYVNVGTEIVRVEDTSSMKVDFALSQNDLDKLHIGQRVTATTDARLGETFSARITAIEPAINSSTGLVDVQATFDPEDGHKLLSGMFSRLRIALPTETNQVVVPQVAISYNMYGEIAYLLEPLSEEEKGKMSGNEKLDRLYRAKQITVFTKDRQGVYAQLQGNEVKVGDKIITGGQQGIGNGSLVEWIKKDIVGAIEPAHKTPL.

Residues 1–21 (MKIILVVFVLIFVGVIGFNMI) form a helical membrane-spanning segment.

It belongs to the membrane fusion protein (MFP) (TC 8.A.1) family.

It localises to the membrane. This is an uncharacterized protein from Haemophilus influenzae (strain ATCC 51907 / DSM 11121 / KW20 / Rd).